We begin with the raw amino-acid sequence, 347 residues long: NADH-ubiquinone oxidoreductase chain 2 (347 aa).

Transmembrane regions (helical) follow at residues 3–23 (PPIL…VLTS), 25–45 (HWLL…PILM), 60–80 (FLTQ…NLMF), 96–116 (GLVT…FWVP), 122–142 (ISLS…LSIL), 153–173 (LLIT…LNQT), 178–198 (ILAY…TYNP), 200–220 (LMIL…MLFM), 237–257 (LPLM…LPPL), 274–294 (DMII…YFYM), and 323–343 (IILL…TPMM).

This sequence belongs to the complex I subunit 2 family. Core subunit of respiratory chain NADH dehydrogenase (Complex I) which is composed of 45 different subunits. Interacts with TMEM242.

The protein localises to the mitochondrion inner membrane. The enzyme catalyses a ubiquinone + NADH + 5 H(+)(in) = a ubiquinol + NAD(+) + 4 H(+)(out). Its function is as follows. Core subunit of the mitochondrial membrane respiratory chain NADH dehydrogenase (Complex I) which catalyzes electron transfer from NADH through the respiratory chain, using ubiquinone as an electron acceptor. Essential for the catalytic activity and assembly of complex I. The chain is NADH-ubiquinone oxidoreductase chain 2 from Halichoerus grypus (Gray seal).